The chain runs to 555 residues: CTP synthase (555 aa).

The tract at residues 1–265 is amidoligase domain; it reads MTRYIFITGG…GNRVCEKLNI (265 aa). Serine 13 is a CTP binding site. Residue serine 13 participates in UTP binding. ATP is bound by residues 14 to 19 and aspartate 71; that span reads SLGKGI. The Mg(2+) site is built by aspartate 71 and glutamate 139. CTP contacts are provided by residues 146 to 148, 186 to 191, and lysine 222; these read DIE and KTKPTQ. UTP is bound by residues 186–191 and lysine 222; that span reads KTKPTQ. The 252-residue stretch at 290–541 folds into the Glutamine amidotransferase type-1 domain; sequence TVAVVGKYVD…IKAGLAAKEA (252 aa). Glycine 351 contributes to the L-glutamine binding site. The Nucleophile; for glutamine hydrolysis role is filled by cysteine 378. L-glutamine is bound by residues 379–382, glutamate 402, and arginine 469; that span reads LGMQ. Residues histidine 514 and glutamate 516 contribute to the active site.

This sequence belongs to the CTP synthase family. In terms of assembly, homotetramer.

It catalyses the reaction UTP + L-glutamine + ATP + H2O = CTP + L-glutamate + ADP + phosphate + 2 H(+). It carries out the reaction L-glutamine + H2O = L-glutamate + NH4(+). The enzyme catalyses UTP + NH4(+) + ATP = CTP + ADP + phosphate + 2 H(+). The protein operates within pyrimidine metabolism; CTP biosynthesis via de novo pathway; CTP from UDP: step 2/2. With respect to regulation, allosterically activated by GTP, when glutamine is the substrate; GTP has no effect on the reaction when ammonia is the substrate. The allosteric effector GTP functions by stabilizing the protein conformation that binds the tetrahedral intermediate(s) formed during glutamine hydrolysis. Inhibited by the product CTP, via allosteric rather than competitive inhibition. Catalyzes the ATP-dependent amination of UTP to CTP with either L-glutamine or ammonia as the source of nitrogen. Regulates intracellular CTP levels through interactions with the four ribonucleotide triphosphates. The protein is CTP synthase of Coxiella burnetii (strain Dugway 5J108-111).